The following is a 198-amino-acid chain: Protein GrpE (198 aa).

It belongs to the GrpE family. Homodimer.

The protein resides in the cytoplasm. Functionally, participates actively in the response to hyperosmotic and heat shock by preventing the aggregation of stress-denatured proteins, in association with DnaK and GrpE. It is the nucleotide exchange factor for DnaK and may function as a thermosensor. Unfolded proteins bind initially to DnaJ; upon interaction with the DnaJ-bound protein, DnaK hydrolyzes its bound ATP, resulting in the formation of a stable complex. GrpE releases ADP from DnaK; ATP binding to DnaK triggers the release of the substrate protein, thus completing the reaction cycle. Several rounds of ATP-dependent interactions between DnaJ, DnaK and GrpE are required for fully efficient folding. The sequence is that of Protein GrpE from Lysinibacillus sphaericus (Bacillus sphaericus).